The chain runs to 72 residues: Translation initiation factor IF-1 1 (72 aa).

The S1-like domain occupies 1 to 72; it reads MAKDDVIQMQ…SRARIVFRAK (72 aa).

Belongs to the IF-1 family. In terms of assembly, component of the 30S ribosomal translation pre-initiation complex which assembles on the 30S ribosome in the order IF-2 and IF-3, IF-1 and N-formylmethionyl-tRNA(fMet); mRNA recruitment can occur at any time during PIC assembly.

Its subcellular location is the cytoplasm. Its function is as follows. One of the essential components for the initiation of protein synthesis. Stabilizes the binding of IF-2 and IF-3 on the 30S subunit to which N-formylmethionyl-tRNA(fMet) subsequently binds. Helps modulate mRNA selection, yielding the 30S pre-initiation complex (PIC). Upon addition of the 50S ribosomal subunit IF-1, IF-2 and IF-3 are released leaving the mature 70S translation initiation complex. This is Translation initiation factor IF-1 1 from Ralstonia nicotianae (strain ATCC BAA-1114 / GMI1000) (Ralstonia solanacearum).